Reading from the N-terminus, the 373-residue chain is Chorismate synthase (373 aa).

Residue arginine 46 participates in NADP(+) binding. FMN contacts are provided by residues 123–125 (RSS), 251–252 (NA), glycine 295, 310–314 (KPTPS), and arginine 337.

Belongs to the chorismate synthase family. The cofactor is FMNH2.

It carries out the reaction 5-O-(1-carboxyvinyl)-3-phosphoshikimate = chorismate + phosphate. It participates in metabolic intermediate biosynthesis; chorismate biosynthesis; chorismate from D-erythrose 4-phosphate and phosphoenolpyruvate: step 7/7. Catalyzes the anti-1,4-elimination of the C-3 phosphate and the C-6 proR hydrogen from 5-enolpyruvylshikimate-3-phosphate (EPSP) to yield chorismate, which is the branch point compound that serves as the starting substrate for the three terminal pathways of aromatic amino acid biosynthesis. This reaction introduces a second double bond into the aromatic ring system. The protein is Chorismate synthase of Methanococcus maripaludis (strain C5 / ATCC BAA-1333).